Consider the following 504-residue polypeptide: Maturase K (504 aa).

Belongs to the intron maturase 2 family. MatK subfamily.

The protein resides in the plastid. The protein localises to the chloroplast. Functionally, usually encoded in the trnK tRNA gene intron. Probably assists in splicing its own and other chloroplast group II introns. The protein is Maturase K of Wollastonia biflora (Beach sunflower).